The chain runs to 444 residues: Cadaverine/lysine antiporter (444 aa).

Helical transmembrane passes span 7–27, 35–55, 95–115, 123–143, 149–169, 193–213, 222–242, 273–293, 323–343, 354–374, 384–404, and 405–425; these read IGLFACTGVVAGNMMGSGIAL, IGGIAIWGWIISIIGAMSLAY, IGNLAIGITAVSYLSTFFPVL, IACIAIVWVFTFVNMLGGTWV, IGLVLVLIPVVMTAIVGWHWF, ILLCLWAFVGVESAAVSTGMV, LATMLGTGLAGIVYIAATQVL, LVSAFTAFACLTSLGSWMMLV, LLLAAVKMTALMILITLMNSA, LTGIAVLLTMLPYFYSCVDLI, FVSLICSVLGCVFCFIALMGA, and SSFELAGTFIVSLIILMFYAR.

This sequence belongs to the amino acid-polyamine-organocation (APC) superfamily. Basic amino acid/polyamine antiporter (APA) (TC 2.A.3.2) family.

Its subcellular location is the cell inner membrane. It catalyses the reaction cadaverine(in) + L-lysine(out) = cadaverine(out) + L-lysine(in). Its function is as follows. Under acidic conditions, in the presence of lysine, functions as a cadaverine:lysine antiporter that facilitates the excretion of cadaverine and the uptake of lysine. The protein is Cadaverine/lysine antiporter (cadB) of Escherichia coli O157:H7.